Reading from the N-terminus, the 258-residue chain is Peptidase inhibitor 15 (258 aa).

An N-terminal signal peptide occupies residues 1 to 21 (MIMNSAVSLVILLSLLCEAHT). The propeptide occupies 22-60 (VVLLNPTDSSLPANNFTDTEAALSTPLESADIPKARRKR). Asn36 and Asn124 each carry an N-linked (GlcNAc...) asparagine glycan. The SCP domain occupies 71–211 (LDYHNQVRGK…RRAVYLVCNY (141 aa)).

Belongs to the CRISP family. In terms of processing, N-glycosylated. In terms of tissue distribution, weakly expressed. Expressed at low level in prostate, mammary gland, salivary gland and thyroid gland.

Its subcellular location is the secreted. Serine protease inhibitor which displays weak inhibitory activity against trypsin. May play a role in facial patterning during embryonic development. The protein is Peptidase inhibitor 15 (Pi15) of Mus musculus (Mouse).